The primary structure comprises 245 residues: tRNA (guanine-N(1)-)-methyltransferase (245 aa).

S-adenosyl-L-methionine-binding positions include G111 and 131-136; that span reads MGDYVL.

This sequence belongs to the RNA methyltransferase TrmD family. As to quaternary structure, homodimer.

The protein resides in the cytoplasm. The catalysed reaction is guanosine(37) in tRNA + S-adenosyl-L-methionine = N(1)-methylguanosine(37) in tRNA + S-adenosyl-L-homocysteine + H(+). Functionally, specifically methylates guanosine-37 in various tRNAs. This is tRNA (guanine-N(1)-)-methyltransferase from Staphylococcus aureus (strain USA300).